The following is a 495-amino-acid chain: Trigger factor (495 aa).

A PPIase FKBP-type domain is found at 169–254; it reads GDRVAMDYVG…VKDVAAPGAV (86 aa). The interval 441–495 is disordered; that stretch reads LAEDEGEAKAETKKAAPKKKAAAKTEAAEAGEGEEAAAPKKKAAPKKKAADESAE.

It belongs to the FKBP-type PPIase family. Tig subfamily.

Its subcellular location is the cytoplasm. It carries out the reaction [protein]-peptidylproline (omega=180) = [protein]-peptidylproline (omega=0). Involved in protein export. Acts as a chaperone by maintaining the newly synthesized protein in an open conformation. Functions as a peptidyl-prolyl cis-trans isomerase. This is Trigger factor from Rhizobium etli (strain CIAT 652).